Reading from the N-terminus, the 503-residue chain is AMP phosphorylase (503 aa).

Residues glycine 168, 194 to 199 (SRAITS), and threonine 203 contribute to the AMP site. Aspartate 256 functions as the Proton donor in the catalytic mechanism. Residues serine 264 and lysine 288 each coordinate AMP.

It belongs to the thymidine/pyrimidine-nucleoside phosphorylase family. Type 2 subfamily.

It carries out the reaction AMP + phosphate = alpha-D-ribose 1,5-bisphosphate + adenine. The enzyme catalyses CMP + phosphate = cytosine + alpha-D-ribose 1,5-bisphosphate. It catalyses the reaction UMP + phosphate = alpha-D-ribose 1,5-bisphosphate + uracil. Functionally, catalyzes the conversion of AMP and phosphate to adenine and ribose 1,5-bisphosphate (R15P). Exhibits phosphorylase activity toward CMP and UMP in addition to AMP. Functions in an archaeal AMP degradation pathway, together with R15P isomerase and RubisCO. In Pyrococcus abyssi (strain GE5 / Orsay), this protein is AMP phosphorylase (deoA).